The chain runs to 247 residues: Protein NipSnap homolog 3B (247 aa).

2 positions are modified to N6-succinyllysine: K45 and K57.

The protein belongs to the NipSnap family.

The protein is Protein NipSnap homolog 3B (NIPSNAP3B) of Homo sapiens (Human).